The chain runs to 634 residues: TATA box-binding protein-associated factor RNA polymerase I subunit B (634 aa).

The RRN7-type zinc-finger motif lies at 19 to 51 (LVCEYCGHGSEYAEDDADNGFFTCRQCSAIHTS). 4 residues coordinate Zn(2+): Cys21, Cys24, Cys42, and Cys45. The segment at 51-80 (STQNTATNPFDFPMTPAHLSAHRRPTQPTP) is B-reader. A disordered region spans residues 56-117 (ATNPFDFPMT…EPRDFATGAN (62 aa)). The segment covering 77 to 87 (QPTPTPKPFPA) has biased composition (pro residues). The interval 81–83 (TPK) is B-linker. The tract at residues 84 to 281 (PFPAPRGAAT…DKLLGSSLND (198 aa)) is N-terminal cyclin fold. A compositionally biased stretch (low complexity) spans 88-98 (PRGAATGAAAP). The interval 282-284 (CPL) is C-terminal cyclin fold.

The protein belongs to the RRN7/TAF1B family.

The protein resides in the nucleus. Its subcellular location is the nucleolus. In terms of biological role, component of RNA polymerase I core factor complex that acts as a GTF2B/TFIIB-like factor and plays a key role in multiple steps during transcription initiation such as pre-initiation complex (PIC) assembly and postpolymerase recruitment events in polymerase I (Pol I) transcription. Binds rDNA promoters and plays a role in Pol I recruitment. This chain is TATA box-binding protein-associated factor RNA polymerase I subunit B, found in Oryza sativa subsp. indica (Rice).